A 338-amino-acid chain; its full sequence is Nuclear hormone receptor family member nhr-108 (338 aa).

The nuclear receptor DNA-binding region spans 7 to 82 (NQPCMVCGEI…IGMLEKVVAS (76 aa)). The segment at 10–30 (CMVCGEISYSIRFGAVSCRAC) adopts an NR C4-type zinc-finger fold. The NR C4-type; degenerate zinc-finger motif lies at 46–65 (KRCNGACDLGKYHRKTCQSC). Residues 92–338 (NNQTILSGLE…QCPLYEATNE (247 aa)) enclose the NR LBD domain.

The protein belongs to the nuclear hormone receptor family.

Its subcellular location is the nucleus. Its function is as follows. Orphan nuclear receptor. The sequence is that of Nuclear hormone receptor family member nhr-108 (nhr-108) from Caenorhabditis elegans.